Reading from the N-terminus, the 299-residue chain is Regucalcin (299 aa).

A divalent metal cation is bound at residue Glu-18. Substrate is bound by residues Arg-101, Asn-103, and Glu-121. Asn-154 and Asp-204 together coordinate a divalent metal cation. Asp-204 (proton donor/acceptor) is an active-site residue.

Belongs to the SMP-30/CGR1 family. The cofactor is Zn(2+). Mn(2+) is required as a cofactor. Ca(2+) serves as cofactor. Requires Mg(2+) as cofactor.

The protein resides in the cytoplasm. The enzyme catalyses D-glucono-1,5-lactone + H2O = D-gluconate + H(+). The protein operates within cofactor biosynthesis; L-ascorbate biosynthesis via UDP-alpha-D-glucuronate pathway; L-ascorbate from UDP-alpha-D-glucuronate: step 3/4. Its function is as follows. Gluconolactonase with low activity towards other sugar lactones, including gulonolactone and galactonolactone. Catalyzes a key step in ascorbic acid (vitamin C) biosynthesis. Can also hydrolyze diisopropyl phosphorofluoridate and phenylacetate (in vitro). Calcium-binding protein. Modulates Ca(2+) signaling, and Ca(2+)-dependent cellular processes and enzyme activities. This chain is Regucalcin, found in Gallus gallus (Chicken).